A 248-amino-acid polypeptide reads, in one-letter code: Ribonuclease PH (248 aa).

Residues Arg86 and Gly124 to Arg126 each bind phosphate.

This sequence belongs to the RNase PH family. In terms of assembly, homohexameric ring arranged as a trimer of dimers.

The catalysed reaction is tRNA(n+1) + phosphate = tRNA(n) + a ribonucleoside 5'-diphosphate. Phosphorolytic 3'-5' exoribonuclease that plays an important role in tRNA 3'-end maturation. Removes nucleotide residues following the 3'-CCA terminus of tRNAs; can also add nucleotides to the ends of RNA molecules by using nucleoside diphosphates as substrates, but this may not be physiologically important. Probably plays a role in initiation of 16S rRNA degradation (leading to ribosome degradation) during starvation. This chain is Ribonuclease PH, found in Listeria innocua serovar 6a (strain ATCC BAA-680 / CLIP 11262).